A 316-amino-acid polypeptide reads, in one-letter code: Putative ring-cleaving dioxygenase MhqA (316 aa).

VOC domains lie at 5–131 (GIHH…LTAD) and 154–278 (GLGP…LSTD). Positions 8, 226, and 274 each coordinate Fe cation.

It belongs to the extradiol ring-cleavage dioxygenase family. Requires Fe(2+) as cofactor.

It localises to the cytoplasm. Putative ring-cleavage dioxygenase that may contribute to the degradation of aromatic compounds. The polypeptide is Putative ring-cleaving dioxygenase MhqA (mhqA) (Bacillus subtilis (strain 168)).